A 424-amino-acid chain; its full sequence is Putative glutamate--cysteine ligase 2-3 (424 aa).

Disordered stretches follow at residues 1–20 (MQMA…PVLV) and 405–424 (GAAA…VRRP).

This sequence belongs to the glutamate--cysteine ligase type 2 family. YbdK subfamily.

It catalyses the reaction L-cysteine + L-glutamate + ATP = gamma-L-glutamyl-L-cysteine + ADP + phosphate + H(+). ATP-dependent carboxylate-amine ligase which exhibits weak glutamate--cysteine ligase activity. This Paenarthrobacter aurescens (strain TC1) protein is Putative glutamate--cysteine ligase 2-3.